Reading from the N-terminus, the 131-residue chain is UPF0102 protein YraN (131 aa).

The protein belongs to the UPF0102 family.

This is UPF0102 protein YraN from Salmonella agona (strain SL483).